Consider the following 637-residue polypeptide: 1-deoxy-D-xylulose-5-phosphate synthase (637 aa).

Thiamine diphosphate contacts are provided by residues H88 and 129-131; that span reads GHS. D160 provides a ligand contact to Mg(2+). Thiamine diphosphate contacts are provided by residues 161–162, N189, F293, and E370; that span reads GA. N189 contributes to the Mg(2+) binding site.

The protein belongs to the transketolase family. DXPS subfamily. As to quaternary structure, homodimer. The cofactor is Mg(2+). Requires thiamine diphosphate as cofactor.

The enzyme catalyses D-glyceraldehyde 3-phosphate + pyruvate + H(+) = 1-deoxy-D-xylulose 5-phosphate + CO2. It participates in metabolic intermediate biosynthesis; 1-deoxy-D-xylulose 5-phosphate biosynthesis; 1-deoxy-D-xylulose 5-phosphate from D-glyceraldehyde 3-phosphate and pyruvate: step 1/1. In terms of biological role, catalyzes the acyloin condensation reaction between C atoms 2 and 3 of pyruvate and glyceraldehyde 3-phosphate to yield 1-deoxy-D-xylulose-5-phosphate (DXP). In Acinetobacter baumannii (strain AYE), this protein is 1-deoxy-D-xylulose-5-phosphate synthase.